Reading from the N-terminus, the 318-residue chain is Aldehyde oxidoreductase FAD-binding subunit PaoB (318 aa).

One can recognise an FAD-binding PCMH-type domain in the interval 1-223 (MKAFTYERVN…VAVTLPPPLG (223 aa)). FAD contacts are provided by residues 26–34 (KFIAGGTNL) and T108. C119, C129, C138, and C157 together coordinate [4Fe-4S] cluster. FAD contacts are provided by D164, I213, and K230.

As to quaternary structure, heterotrimer composed of PaoA, PaoB and PaoC. FAD is required as a cofactor. [4Fe-4S] cluster serves as cofactor.

The protein resides in the periplasm. The catalysed reaction is an aldehyde + A + H2O = a carboxylate + AH2 + H(+). With respect to regulation, the complex requires PaoD for activity. Functionally, oxidizes aldehydes to the corresponding carboxylic acids with a preference for aromatic aldehydes. It might play a role in the detoxification of aldehydes to avoid cell damage. This is Aldehyde oxidoreductase FAD-binding subunit PaoB from Escherichia coli (strain K12).